The following is a 120-amino-acid chain: Crustacean hyperglycemic hormones 2 (120 aa).

The N-terminal stretch at 1-27 (MIAFHMVWSALLASLLLLLLAPSASPV) is a signal peptide. 3 cysteine pairs are disulfide-bonded: C53/C89, C69/C85, and C72/C98. V118 is subject to Valine amide.

The protein belongs to the arthropod CHH/MIH/GIH/VIH hormone family.

Its subcellular location is the secreted. Its function is as follows. Hormone found in the sinus gland of isopods and decapods which controls the blood sugar level. Has a secretagogue action over the amylase released from the midgut gland. May act as a stress hormone and may be involved in the control of molting and reproduction. This Penaeus japonicus (Kuruma prawn) protein is Crustacean hyperglycemic hormones 2.